Consider the following 193-residue polypeptide: Ion-translocating oxidoreductase complex subunit B (193 aa).

Residues 1 to 26 form a hydrophobic region; it reads MSTMLIAVILLTLLALFFGVLLGFAA. Residues 32-90 enclose the 4Fe-4S domain; sequence EGNPIVDELEAILPQTQCGQCGYPGCRPYAEAIANGDKVNKCPPGGTATMEKLASLMGV. The [4Fe-4S] cluster site is built by C49, C52, C57, C73, C114, C117, C120, C124, C144, C147, C150, and C154. 4Fe-4S ferredoxin-type domains follow at residues 105-134 and 136-164; these read KVAY…GAGK and MHTV…MIPV.

This sequence belongs to the 4Fe4S bacterial-type ferredoxin family. RnfB subfamily. As to quaternary structure, the complex is composed of six subunits: RnfA, RnfB, RnfC, RnfD, RnfE and RnfG. Requires [4Fe-4S] cluster as cofactor.

The protein localises to the cell inner membrane. In terms of biological role, part of a membrane-bound complex that couples electron transfer with translocation of ions across the membrane. This is Ion-translocating oxidoreductase complex subunit B from Shewanella sp. (strain MR-7).